A 376-amino-acid chain; its full sequence is Serpin B9 (376 aa).

N-acetylmethionine is present on Met1.

The protein belongs to the serpin family. Ov-serpin subfamily.

It localises to the cytoplasm. Granzyme B inhibitor. The polypeptide is Serpin B9 (SERPINB9) (Homo sapiens (Human)).